The following is a 692-amino-acid chain: Elongation factor G (692 aa).

Positions 8–283 (KNTRNIGIMA…AVLDYLPSPV (276 aa)) constitute a tr-type G domain. GTP-binding positions include 17-24 (AHIDAGKT), 81-85 (DTPGH), and 135-138 (NKMD).

It belongs to the TRAFAC class translation factor GTPase superfamily. Classic translation factor GTPase family. EF-G/EF-2 subfamily.

The protein localises to the cytoplasm. In terms of biological role, catalyzes the GTP-dependent ribosomal translocation step during translation elongation. During this step, the ribosome changes from the pre-translocational (PRE) to the post-translocational (POST) state as the newly formed A-site-bound peptidyl-tRNA and P-site-bound deacylated tRNA move to the P and E sites, respectively. Catalyzes the coordinated movement of the two tRNA molecules, the mRNA and conformational changes in the ribosome. The polypeptide is Elongation factor G (Exiguobacterium sibiricum (strain DSM 17290 / CCUG 55495 / CIP 109462 / JCM 13490 / 255-15)).